A 496-amino-acid polypeptide reads, in one-letter code: Maturase K (496 aa).

The protein belongs to the intron maturase 2 family. MatK subfamily.

Its subcellular location is the plastid. The protein localises to the chloroplast. Its function is as follows. Usually encoded in the trnK tRNA gene intron. Probably assists in splicing its own and other chloroplast group II introns. This chain is Maturase K, found in Paeonia suffruticosa (Tree peony).